A 665-amino-acid polypeptide reads, in one-letter code: Probable arginine--tRNA ligase, cytoplasmic (665 aa).

Residues 204–206 (SPN), His215, Tyr390, Asp394, and Gln418 contribute to the L-arginine site. The 'HIGH' region motif lies at 205-216 (PNIAKQMHVGHL). The tract at residues 535–549 (NTAVYLLYTYTRICS) is interaction with tRNA.

This sequence belongs to the class-I aminoacyl-tRNA synthetase family.

It is found in the cytoplasm. The protein localises to the cytosol. The catalysed reaction is tRNA(Arg) + L-arginine + ATP = L-arginyl-tRNA(Arg) + AMP + diphosphate. Its function is as follows. Forms part of a macromolecular complex that catalyzes the attachment of specific amino acids to cognate tRNAs during protein synthesis. This Drosophila melanogaster (Fruit fly) protein is Probable arginine--tRNA ligase, cytoplasmic.